Reading from the N-terminus, the 372-residue chain is Chaperone protein DnaJ (372 aa).

One can recognise a J domain in the interval aspartate 5–glycine 69. The segment at glycine 129–arginine 211 adopts a CR-type zinc-finger fold. Cysteine 142, cysteine 145, cysteine 159, cysteine 162, cysteine 185, cysteine 188, cysteine 199, and cysteine 202 together coordinate Zn(2+). CXXCXGXG motif repeat units follow at residues cysteine 142–glycine 149, cysteine 159–glycine 166, cysteine 185–glycine 192, and cysteine 199–glycine 206.

The protein belongs to the DnaJ family. Homodimer. Zn(2+) is required as a cofactor.

The protein resides in the cytoplasm. Its function is as follows. Participates actively in the response to hyperosmotic and heat shock by preventing the aggregation of stress-denatured proteins and by disaggregating proteins, also in an autonomous, DnaK-independent fashion. Unfolded proteins bind initially to DnaJ; upon interaction with the DnaJ-bound protein, DnaK hydrolyzes its bound ATP, resulting in the formation of a stable complex. GrpE releases ADP from DnaK; ATP binding to DnaK triggers the release of the substrate protein, thus completing the reaction cycle. Several rounds of ATP-dependent interactions between DnaJ, DnaK and GrpE are required for fully efficient folding. Also involved, together with DnaK and GrpE, in the DNA replication of plasmids through activation of initiation proteins. In Shouchella clausii (strain KSM-K16) (Alkalihalobacillus clausii), this protein is Chaperone protein DnaJ.